The chain runs to 467 residues: MVAITSLAQSLEHLKRKDYSCLELVETLIARCEAAKSLNALLATDWDGLRRSAKKIDRHGNAGVGLCGIPLCFKANIATGVFPTSAATPALINHLPKIPSRVAERLFSAGALPGASGNMHELSFGITSNNYATGAVRNPWNPDLIPGGSSGGVAAAVASRLMLGGIGTDTGASVRLPAALCGVVGFRPTLGRYPGDRIIPVSPTRDTPGIIAQCVADVVILDRIISGTPERIPPVPLKGLRIGLPTTYFYDDLDADVALAAETTIRLLANKGVTFVEANIPHLDELNKGASFPVALYEFPHALKQYLDDFVKTVSFSDVIKGIRSPDVANIANAQIDGHQISKAEYELARHSFRPRLQATYRNYFKLNRLDAILFPTAPLVARPIGQDSSVIHNGTMLDTFKIYVRNVDPSSNAGLPGLSIPVCLTPDRLPVGMEIDGLADSDQRLLAIGGALEEAIGFRYFAGLPN.

Active-site charge relay system residues include Lys-74 and Ser-149. Residue Ser-173 is the Acyl-ester intermediate of the active site.

The protein belongs to the amidase family.

Its pathway is plant hormone metabolism; auxin biosynthesis. Hydrolyzes indole-3-acetamide (IAM) into indole-3-acetic acid (IAA). The sequence is that of Indoleacetamide hydrolase (tms2) from Rhizobium radiobacter (Agrobacterium tumefaciens).